A 336-amino-acid chain; its full sequence is Holliday junction branch migration complex subunit RuvB (336 aa).

The tract at residues 4–185 (MDERLLSGES…FGVLSRLEYY (182 aa)) is large ATPase domain (RuvB-L). Residues Leu-24, Arg-25, Gly-66, Lys-69, Thr-70, Thr-71, 132-134 (EDF), Arg-175, Tyr-185, and Arg-222 each bind ATP. Thr-70 is a Mg(2+) binding site. The interval 186–256 (TVDQLSAIVE…ITQMALELLQ (71 aa)) is small ATPAse domain (RuvB-S). The tract at residues 259 to 336 (KLGLDHIDHK…EHFGMEMPKV (78 aa)) is head domain (RuvB-H). DNA is bound by residues Arg-314 and Arg-319.

Belongs to the RuvB family. As to quaternary structure, homohexamer. Forms an RuvA(8)-RuvB(12)-Holliday junction (HJ) complex. HJ DNA is sandwiched between 2 RuvA tetramers; dsDNA enters through RuvA and exits via RuvB. An RuvB hexamer assembles on each DNA strand where it exits the tetramer. Each RuvB hexamer is contacted by two RuvA subunits (via domain III) on 2 adjacent RuvB subunits; this complex drives branch migration. In the full resolvosome a probable DNA-RuvA(4)-RuvB(12)-RuvC(2) complex forms which resolves the HJ.

It localises to the cytoplasm. The enzyme catalyses ATP + H2O = ADP + phosphate + H(+). Functionally, the RuvA-RuvB-RuvC complex processes Holliday junction (HJ) DNA during genetic recombination and DNA repair, while the RuvA-RuvB complex plays an important role in the rescue of blocked DNA replication forks via replication fork reversal (RFR). RuvA specifically binds to HJ cruciform DNA, conferring on it an open structure. The RuvB hexamer acts as an ATP-dependent pump, pulling dsDNA into and through the RuvAB complex. RuvB forms 2 homohexamers on either side of HJ DNA bound by 1 or 2 RuvA tetramers; 4 subunits per hexamer contact DNA at a time. Coordinated motions by a converter formed by DNA-disengaged RuvB subunits stimulates ATP hydrolysis and nucleotide exchange. Immobilization of the converter enables RuvB to convert the ATP-contained energy into a lever motion, pulling 2 nucleotides of DNA out of the RuvA tetramer per ATP hydrolyzed, thus driving DNA branch migration. The RuvB motors rotate together with the DNA substrate, which together with the progressing nucleotide cycle form the mechanistic basis for DNA recombination by continuous HJ branch migration. Branch migration allows RuvC to scan DNA until it finds its consensus sequence, where it cleaves and resolves cruciform DNA. The polypeptide is Holliday junction branch migration complex subunit RuvB (Bacillus thuringiensis (strain Al Hakam)).